A 372-amino-acid polypeptide reads, in one-letter code: Pyrimidine monooxygenase RutA (372 aa).

FMN contacts are provided by residues 57–58 (IK), asparagine 123, glutamate 132, 148–149 (RY), and serine 198.

Belongs to the NtaA/SnaA/DszA monooxygenase family. RutA subfamily.

The catalysed reaction is uracil + FMNH2 + NADH + O2 = (Z)-3-ureidoacrylate + FMN + NAD(+) + H2O + H(+). It catalyses the reaction thymine + FMNH2 + NADH + O2 = (Z)-2-methylureidoacrylate + FMN + NAD(+) + H2O + H(+). Its function is as follows. Catalyzes the pyrimidine ring opening between N-3 and C-4 by an unusual flavin hydroperoxide-catalyzed mechanism, adding oxygen atoms in the process to yield ureidoacrylate peracid, that immediately reacts with FMN forming ureidoacrylate and FMN-N(5)-oxide. The FMN-N(5)-oxide reacts spontaneously with NADH to produce FMN. Requires the flavin reductase RutF to regenerate FMN in vivo. This is Pyrimidine monooxygenase RutA from Methylorubrum extorquens (strain PA1) (Methylobacterium extorquens).